The sequence spans 167 residues: Signal peptidase complex catalytic subunit SEC11 (167 aa).

The Cytoplasmic portion of the chain corresponds to 1–9 (MNLRFELQK). Residues 10–30 (LLNVCFLFASAYMFWQGLAIA) traverse the membrane as a helical; Signal-anchor for type II membrane protein segment. The Lumenal portion of the chain corresponds to 31 to 167 (TNSASPIVVV…LGLSALLGGE (137 aa)). Residues S44, H83, and D109 each act as charge relay system in the active site. N121 is a glycosylation site (N-linked (GlcNAc...) asparagine). The tract at residues 153–164 (ALLGMLGLSALL) is C-terminal short (CTS) helix.

Belongs to the peptidase S26B family. In terms of assembly, component of the signal peptidase complex (SPC) composed of a catalytic subunit SEC11 and three accessory subunits SPC1, SPC2 and SPC3. The complex induces a local thinning of the ER membrane which is used to measure the length of the signal peptide (SP) h-region of protein substrates. This ensures the selectivity of the complex towards h-regions shorter than 18-20 amino acids. SPC associates with the translocon complex.

It is found in the endoplasmic reticulum membrane. The enzyme catalyses Cleavage of hydrophobic, N-terminal signal or leader sequences from secreted and periplasmic proteins.. Catalytic component of the signal peptidase complex (SPC) which catalyzes the cleavage of N-terminal signal sequences from nascent proteins as they are translocated into the lumen of the endoplasmic reticulum. Specifically cleaves N-terminal signal peptides that contain a hydrophobic alpha-helix (h-region) shorter than 18-20 amino acids. The protein is Signal peptidase complex catalytic subunit SEC11 (SEC11) of Saccharomyces cerevisiae (strain Lalvin QA23) (Baker's yeast).